A 397-amino-acid polypeptide reads, in one-letter code: Acetate kinase (397 aa).

Asn7 contacts Mg(2+). ATP is bound at residue Lys14. Residue Arg90 coordinates substrate. Asp147 (proton donor/acceptor) is an active-site residue. ATP contacts are provided by residues 207–211 (HLGNG), 282–284 (DFR), and 330–334 (GLGEN). Glu383 lines the Mg(2+) pocket.

The protein belongs to the acetokinase family. As to quaternary structure, homodimer. Mg(2+) serves as cofactor. It depends on Mn(2+) as a cofactor.

The protein resides in the cytoplasm. The enzyme catalyses acetate + ATP = acetyl phosphate + ADP. It participates in metabolic intermediate biosynthesis; acetyl-CoA biosynthesis; acetyl-CoA from acetate: step 1/2. Its function is as follows. Catalyzes the formation of acetyl phosphate from acetate and ATP. Can also catalyze the reverse reaction. The polypeptide is Acetate kinase (Clostridium botulinum (strain Okra / Type B1)).